We begin with the raw amino-acid sequence, 453 residues long: Ribosomal protein uS12 methylthiotransferase RimO (453 aa).

Residues 9–124 (PKVGFVSLGC…VMEAVHTHLP (116 aa)) form the MTTase N-terminal domain. 6 residues coordinate [4Fe-4S] cluster: Cys-18, Cys-54, Cys-83, Cys-155, Cys-159, and Cys-162. The Radical SAM core domain occupies 141–382 (LTPKHYAYLK…MEVAERVSAR (242 aa)). In terms of domain architecture, TRAM spans 385–453 (QRKVGKSLRV…ADGHDLWGEV (69 aa)).

The protein belongs to the methylthiotransferase family. RimO subfamily. [4Fe-4S] cluster serves as cofactor.

The protein localises to the cytoplasm. The catalysed reaction is L-aspartate(89)-[ribosomal protein uS12]-hydrogen + (sulfur carrier)-SH + AH2 + 2 S-adenosyl-L-methionine = 3-methylsulfanyl-L-aspartate(89)-[ribosomal protein uS12]-hydrogen + (sulfur carrier)-H + 5'-deoxyadenosine + L-methionine + A + S-adenosyl-L-homocysteine + 2 H(+). In terms of biological role, catalyzes the methylthiolation of an aspartic acid residue of ribosomal protein uS12. The chain is Ribosomal protein uS12 methylthiotransferase RimO from Ralstonia pickettii (strain 12J).